Reading from the N-terminus, the 167-residue chain is Ubiquitin-fold modifier-conjugating enzyme 1 (167 aa).

Residue Cys-116 is the Glycyl thioester intermediate of the active site. Residue Lys-122 forms a Glycyl lysine isopeptide (Lys-Gly) (interchain with G-Cter in UFM1) linkage.

Belongs to the ubiquitin-conjugating enzyme family. UFC1 subfamily. In terms of assembly, interacts with UBA5 (via C-terminus). Interacts with UFL1. Interacts with UFM1. Interacts with KIRREL3. Post-translationally, ufmylated at Lys-122. Deufmylated by UFSP1.

Its function is as follows. E2-like enzyme which specifically catalyzes the second step in ufmylation. Accepts the ubiquitin-like modifier UFM1 from the E1 enzyme UBA5 and forms an intermediate with UFM1 via a thioester linkage. Ufmylation is involved in various processes, such as ribosome recycling, response to DNA damage, interferon response or reticulophagy (also called ER-phagy). The polypeptide is Ubiquitin-fold modifier-conjugating enzyme 1 (Bos taurus (Bovine)).